A 299-amino-acid polypeptide reads, in one-letter code: Coenzyme PQQ synthesis protein B (299 aa).

This sequence belongs to the PqqB family.

It participates in cofactor biosynthesis; pyrroloquinoline quinone biosynthesis. In terms of biological role, may be involved in the transport of PQQ or its precursor to the periplasm. The protein is Coenzyme PQQ synthesis protein B of Methylobacterium sp. (strain 4-46).